The following is a 211-amino-acid chain: IWLWLGTAGMFLGMLYFIARGWGETDSRRQKFYIATILITAIAFVNYLAMALGFGLTIVEFAGEEHPIYWARYSDWLFTTPLLLYDLGLLAGADRNTITSLVSLDVLMIGTGLVATLSAGSGVLSAGAERLVWWGISTAFLLVLLYFLFSSLSGRVADLPSDTRSTFKTLRNLVTVVWLVYPVWWLIGTEGIGLVGIGIETAGFMVIDLTA.

The helical transmembrane segment at Ile1 to Ala19 threads the bilayer. Topologically, residues Arg20–Tyr33 are cytoplasmic. A helical membrane pass occupies residues Ile34–Leu52. The Extracellular portion of the chain corresponds to Gly53 to Ile68. The chain crosses the membrane as a helical span at residues Tyr69–Asp86. The Cytoplasmic segment spans residues Leu87–Thr97. Residues Ile98–Leu117 traverse the membrane as a helical segment. The Extracellular segment spans residues Ser118 to Arg130. A helical transmembrane segment spans residues Leu131 to Ser150. Over Ser151 to Lys168 the chain is Cytoplasmic. Residues Thr169–Ile187 traverse the membrane as a helical segment. Residues Gly188 to Ile199 are Extracellular-facing. Residues Glu200–Ala211 traverse the membrane as a helical segment.

It belongs to the archaeal/bacterial/fungal opsin family.

It is found in the cell membrane. Its function is as follows. Light-driven proton pump. This chain is Bacteriorhodopsin (bop), found in Halobacterium halobium (strain port).